A 103-amino-acid chain; its full sequence is Large ribosomal subunit protein bL21 (103 aa).

This sequence belongs to the bacterial ribosomal protein bL21 family. Part of the 50S ribosomal subunit. Contacts protein L20.

In terms of biological role, this protein binds to 23S rRNA in the presence of protein L20. This is Large ribosomal subunit protein bL21 from Lactobacillus delbrueckii subsp. bulgaricus (strain ATCC 11842 / DSM 20081 / BCRC 10696 / JCM 1002 / NBRC 13953 / NCIMB 11778 / NCTC 12712 / WDCM 00102 / Lb 14).